Consider the following 873-residue polypeptide: DNA mismatch repair protein MutS (873 aa).

An ATP-binding site is contributed by 625–632; the sequence is GPNMGGKS.

Belongs to the DNA mismatch repair MutS family.

This protein is involved in the repair of mismatches in DNA. It is possible that it carries out the mismatch recognition step. This protein has a weak ATPase activity. The protein is DNA mismatch repair protein MutS of Xanthomonas oryzae pv. oryzae (strain KACC10331 / KXO85).